The chain runs to 293 residues: EID1-like F-box protein 1 (293 aa).

Positions Gln-16–Ala-68 constitute an F-box domain. The interval Ala-245–Gln-293 is disordered. The span at Asp-250–Asp-259 shows a compositional bias: basic and acidic residues.

In Arabidopsis thaliana (Mouse-ear cress), this protein is EID1-like F-box protein 1 (EDL1).